Reading from the N-terminus, the 49-residue chain is Large ribosomal subunit protein bL33A (49 aa).

Belongs to the bacterial ribosomal protein bL33 family.

The polypeptide is Large ribosomal subunit protein bL33A (Streptococcus pneumoniae (strain Hungary19A-6)).